Consider the following 174-residue polypeptide: CDP-archaeol synthase (174 aa).

4 consecutive transmembrane segments (helical) span residues 51–71, 74–94, 112–132, and 136–156; these read LIGL…AGFI, SLLV…ALLG, MLPI…TFLL, and WLLA…IPVF.

It belongs to the CDP-archaeol synthase family. The cofactor is Mg(2+).

It is found in the cell membrane. It catalyses the reaction 2,3-bis-O-(geranylgeranyl)-sn-glycerol 1-phosphate + CTP + H(+) = CDP-2,3-bis-O-(geranylgeranyl)-sn-glycerol + diphosphate. Its pathway is membrane lipid metabolism; glycerophospholipid metabolism. Functionally, catalyzes the formation of CDP-2,3-bis-(O-geranylgeranyl)-sn-glycerol (CDP-archaeol) from 2,3-bis-(O-geranylgeranyl)-sn-glycerol 1-phosphate (DGGGP) and CTP. This reaction is the third ether-bond-formation step in the biosynthesis of archaeal membrane lipids. The chain is CDP-archaeol synthase from Methanocella arvoryzae (strain DSM 22066 / NBRC 105507 / MRE50).